Here is a 1607-residue protein sequence, read N- to C-terminus: MHPGSISFNMIINKCIPICLFILFIMMMEFTVSKADSKNDIVSESHPSLQKLGCGGSQSPTNGVCGSVDIRSSMDNFKLLENCTVIEGSLRISLFELKALDFRHLSFPDLREITDYLLMYRVYGLETLSKLFPNLAIIRGRELFNSYAIVMYEMRDLQDLGLVNLRTISRGGVRLTKNFKLCYIETINWTQIGVSDPEARRFINNKEQCPNSCKDECQSKRCWTYSDCQKGLNCQCKENTYCMENGSCCHDYCLGGCKVPMNPDECFSCKEVQFNNTCRPQCPPGTYKFLNRRCLTDKECLALTNDPDGNTPKLLDGEKGEPSLCLYTCPQNYSVGDSKDNKNLSQCVKCRQLCPKECHGLEINNIQDAHKLKECSKISGPLKIQIMSGSNVAQELEKSLGNIREVTETIHIKRSYALVTLHFFKNLQIIGSKVPSSETQEGQSFSLFLMDNTNLQELFPEEQMKKMKILNGGIYVHDNGQLCPHTIKEFLSHLNLSEAQSSISSISNGHQRPCEKHDLNVTVEKIAHNAAILAWNKYKADERQLLTYILNYKEIKDESNDINIFQGRDLCSHDLWMTREYAPKEGPEADQIGMLYDLKPFTTYAVYIQAYTVSTATHAAMTNILTFTTYPFHPSEPTDLVAISEDPHELRVSWKPPKYPNGNITHYKIVYHKLELNEKSYEQRNYCRDPLVHQKKKEKVKIEEEGKKINNSANSNCCKCPKSKEEMDTESRKREIEMYFEDYLHKHIYCKRYDKLPDEVDLNFDGMNLPQLVEMNYNSSETSDRIEVFPNYVIENTSDLANLTEIVKEVVVYGTTEVTLPNLEHFSEYSIEVLACQDYNEKVLSKLCSIRAITFERTKDSYAADMINETTVDTEIETNFTGNVFIKWESPTSPNGLILKYLLWYKKANQENLVPQTICITRQEYLKNLGYKLTRLEPGNWTFKISAISLAENSSFTLERFFIVPRPPDPESSNTLLIVAIVLAFFGVLTVSLIVACVYYKQKIRSDDMTVISRNMNYVPSEILYISDEWEVDRDKIKLIKELGQGSFGMVYEGVAKGIRDDPNEEIPVAVKTVNDRASFSDRREFLKEATTMKEFHCHHVVKLLGVVSTGQPALVIMELMALGDLKNYLRGHRPDEDHPGVMPPHLLDILQMAGEIADGMAYLADKKFVHRDLAARNCMVSEERTVKIGDFGMTRDIYETDYYRKGGKGMLPVRWMAPESLKDGVFTSLSDVWSYGVVMWEMVTLAAQPYQGLSNEEVVKFISDGYIMELPENCPNEMAYLMQHCWAKKPNQRPTFKAIIEYLLPKLKPSFEKVSYFFTSGGGHTDGAGEGTLAEPEGSDDSSSINSLSCEGAAAPRQSLTPCGGGQFKSSTHFNGGSHTLYDEGVDRETILNGVDDGDEDEAAGRYSLSEFGEDLDDSSRPFMSDDFIPPVMTRQPLLSHQSNGNDSNVRNSGLIELKPLINKDKRPGLSSPRLNARSNPFSSEYIGHYPPTLTTELETLNGNQSSHNNNSFELMTPDPLKSGPASESSNGVSSSSWRPKPILKLPTLNQARVGDSVGCLCLTLGTRINIVKPIETVRPETNTIRYLKPPHPMLIWSTLKMVLVL.

An N-terminal signal peptide occupies residues 1–35 (MHPGSISFNMIINKCIPICLFILFIMMMEFTVSKA). N-linked (GlcNAc...) asparagine glycans are attached at residues Asn-82, Asn-188, Asn-245, Asn-275, Asn-332, Asn-343, Asn-495, Asn-520, Asn-663, Asn-710, Asn-778, Asn-796, Asn-802, Asn-868, Asn-879, Asn-940, and Asn-953. 3 Fibronectin type-III domains span residues 517 to 632 (HDLN…TYPF), 636 to 726 (EPTD…SKEE), and 756 to 861 (LPDE…TKDS). Over 698–975 (EKVKIEEEGK…RPPDPESSNT (278 aa)) the chain is Extracellular. Positions 870–967 (TTVDTEIETN…LERFFIVPRP (98 aa)) constitute a Fibronectin type-III 4 domain. A helical membrane pass occupies residues 976–996 (LLIVAIVLAFFGVLTVSLIVA). The Cytoplasmic segment spans residues 997–1607 (CVYYKQKIRS…WSTLKMVLVL (611 aa)). The 272-residue stretch at 1037-1308 (IKLIKELGQG…AIIEYLLPKL (272 aa)) folds into the Protein kinase domain. Residues 1043–1051 (LGQGSFGMV) and Lys-1072 contribute to the ATP site. Asp-1173 serves as the catalytic Proton acceptor. Residue Tyr-1199 is modified to Phosphotyrosine; by autocatalysis. Disordered stretches follow at residues 1328-1352 (GAGE…LSCE) and 1501-1539 (TLNG…SSSW). Residues 1503 to 1515 (NGNQSSHNNNSFE) show a composition bias toward polar residues. Low complexity predominate over residues 1524 to 1538 (SGPASESSNGVSSSS).

The protein belongs to the protein kinase superfamily. Tyr protein kinase family. Insulin receptor subfamily. In terms of assembly, probable tetramer of 2 alpha and 2 beta chains linked by disulfide bonds. The alpha chains contribute to the formation of the ligand-binding domain, while the beta chains carry the kinase domain. Mn(2+) serves as cofactor.

It is found in the membrane. The catalysed reaction is L-tyrosyl-[protein] + ATP = O-phospho-L-tyrosyl-[protein] + ADP + H(+). Its function is as follows. This receptor probably binds to the four different molluscan insulin-related peptides and has a tyrosine-protein kinase activity. In Lymnaea stagnalis (Great pond snail), this protein is Putative molluscan insulin-related peptide(s) receptor.